Here is a 393-residue protein sequence, read N- to C-terminus: Reticulon-like protein 2 (393 aa).

Positions 1 to 21 (MNRNTTTNKNANLNNSRNANA) are enriched in low complexity. The tract at residues 1-25 (MNRNTTTNKNANLNNSRNANAPGEA) is disordered. Over 1-60 (MNRNTTTNKNANLNNSRNANAPGEAGHQNKTGLIYWTNPSKSGASFAATLVSLLILRNVN) the chain is Cytoplasmic. The 207-residue stretch at 30–236 (KTGLIYWTNP…SISNENKSST (207 aa)) folds into the Reticulon domain. Residues 61–81 (VISVLLKIGYMVLFTSFAVEL) form a helical membrane-spanning segment. Topologically, residues 82 to 149 (STKVLFDKGV…IGVSLYFLHG (68 aa)) are lumenal. N-linked (GlcNAc...) asparagine glycosylation is present at N137. The chain crosses the membrane as a helical span at residues 150-170 (LFAIFSMNTVLIMTTIFLYTV). Residues 171–393 (PLIYDRKQAR…HGLKQKLQHA (223 aa)) are Cytoplasmic-facing. Disordered stretches follow at residues 214 to 313 (IIPP…DVKT) and 339 to 393 (GDYN…LQHA). Residues 220–285 (DEGSYSTSIS…PVSQNENIGT (66 aa)) show a composition bias toward polar residues. S278 is modified (phosphoserine). Over residues 289–313 (GKQEIPTEKDFNNRHENFSKPDVKT) the composition is skewed to basic and acidic residues. The segment covering 365–376 (PAESQSIPIKNN) has biased composition (polar residues). Residues 381-393 (KTTHGLKQKLQHA) are compositionally biased toward basic residues.

The protein localises to the endoplasmic reticulum membrane. This Saccharomyces cerevisiae (strain ATCC 204508 / S288c) (Baker's yeast) protein is Reticulon-like protein 2 (RTN2).